Consider the following 339-residue polypeptide: Glyoxylate reductase (339 aa).

Residues 157–160 (LGRI) and 239–241 (TAR) contribute to the NADP(+) site. Active-site residues include arginine 241 and glutamate 270. Histidine 289 functions as the Proton donor in the catalytic mechanism. 289–291 (HIA) is an NADP(+) binding site.

The protein belongs to the D-isomer specific 2-hydroxyacid dehydrogenase family. GyaR subfamily. As to quaternary structure, homodimer.

The protein resides in the cytoplasm. The catalysed reaction is glycolate + NAD(+) = glyoxylate + NADH + H(+). The sequence is that of Glyoxylate reductase from Thermofilum pendens (strain DSM 2475 / Hrk 5).